We begin with the raw amino-acid sequence, 380 residues long: Chaperone protein DnaJ (380 aa).

One can recognise a J domain in the interval Asp5–Gly72. A CR-type zinc finger spans residues Gly140 to Gln218. Zn(2+) is bound by residues Cys153, Cys156, Cys170, Cys173, Cys192, Cys195, Cys206, and Cys209. 4 CXXCXGXG motif repeats span residues Cys153–Gly160, Cys170–Gly177, Cys192–Gly199, and Cys206–Gly213. Residues Lys359 to Ser380 are disordered. Residues Trp371–Ser380 are compositionally biased toward basic and acidic residues.

This sequence belongs to the DnaJ family. Homodimer. The cofactor is Zn(2+).

The protein localises to the cytoplasm. Participates actively in the response to hyperosmotic and heat shock by preventing the aggregation of stress-denatured proteins and by disaggregating proteins, also in an autonomous, DnaK-independent fashion. Unfolded proteins bind initially to DnaJ; upon interaction with the DnaJ-bound protein, DnaK hydrolyzes its bound ATP, resulting in the formation of a stable complex. GrpE releases ADP from DnaK; ATP binding to DnaK triggers the release of the substrate protein, thus completing the reaction cycle. Several rounds of ATP-dependent interactions between DnaJ, DnaK and GrpE are required for fully efficient folding. Also involved, together with DnaK and GrpE, in the DNA replication of plasmids through activation of initiation proteins. This Delftia acidovorans (strain DSM 14801 / SPH-1) protein is Chaperone protein DnaJ.